A 301-amino-acid polypeptide reads, in one-letter code: Protoheme IX farnesyltransferase (301 aa).

The next 9 helical transmembrane spans lie at 20-42 (FTEL…GMWL), 55-75 (VDVI…SGAF), 105-125 (ALMV…MTTW), 126-146 (QAGV…SLYA), 150-172 (LVSN…WFAV), 176-198 (FSIV…FYAI), 227-247 (MFFW…LGIV), 249-269 (VILA…GFKM), and 280-300 (FVYS…ISIF).

This sequence belongs to the UbiA prenyltransferase family. Protoheme IX farnesyltransferase subfamily. As to quaternary structure, interacts with CtaA.

The protein localises to the cell membrane. The enzyme catalyses heme b + (2E,6E)-farnesyl diphosphate + H2O = Fe(II)-heme o + diphosphate. Its pathway is porphyrin-containing compound metabolism; heme O biosynthesis; heme O from protoheme: step 1/1. In terms of biological role, converts heme B (protoheme IX) to heme O by substitution of the vinyl group on carbon 2 of heme B porphyrin ring with a hydroxyethyl farnesyl side group. This Listeria monocytogenes serovar 1/2a (strain ATCC BAA-679 / EGD-e) protein is Protoheme IX farnesyltransferase.